A 36-amino-acid chain; its full sequence is ACNFQSCWATCQAQHSIYFRRAFCDRSQCKCVFVRG.

Disulfide bonds link Cys-2–Cys-24, Cys-7–Cys-29, and Cys-11–Cys-31. Residue Gly-36 is modified to Glycine amide.

In terms of tissue distribution, expressed in salivary glands and hemocytes.

The protein localises to the secreted. Weak activity against Gram-positive bacteria B.megaterium, S.pyogenes and M.luteus, strong activity against yeasts C.albicans, C.neoformans and S.cerevisiae and filamentous fungi F.oxysporum, F.culmorum, N.crassa and N.hematococca. Less active against filamentous fungus T.viride. Inactive against Gram-positive bacteria A.viridans and S.aureus, filamentous fungi A.fumigatus and B.bassiana and yeast C.glabrata. The chain is Termicin from Pseudacanthotermes spiniger.